Here is a 293-residue protein sequence, read N- to C-terminus: Bifunctional protein FolD (293 aa).

NADP(+)-binding positions include Gly-162–Ser-164 and Ile-227.

It belongs to the tetrahydrofolate dehydrogenase/cyclohydrolase family. In terms of assembly, homodimer.

It carries out the reaction (6R)-5,10-methylene-5,6,7,8-tetrahydrofolate + NADP(+) = (6R)-5,10-methenyltetrahydrofolate + NADPH. The catalysed reaction is (6R)-5,10-methenyltetrahydrofolate + H2O = (6R)-10-formyltetrahydrofolate + H(+). Its pathway is one-carbon metabolism; tetrahydrofolate interconversion. Catalyzes the oxidation of 5,10-methylenetetrahydrofolate to 5,10-methenyltetrahydrofolate and then the hydrolysis of 5,10-methenyltetrahydrofolate to 10-formyltetrahydrofolate. This is Bifunctional protein FolD from Metamycoplasma arthritidis (strain 158L3-1) (Mycoplasma arthritidis).